The primary structure comprises 90 residues: U7-theraphotoxin-Hhn1a 6 (90 aa).

The first 19 residues, 1-19 (MKTAIFTVVLALAVFAVLS), serve as a signal peptide directing secretion. The propeptide occupies 20–50 (FGWEANEKALSEEFTELIHEKEAASEAEARE). 3 disulfides stabilise this stretch: C51-C65, C58-C70, and C64-C81.

It belongs to the neurotoxin 10 (Hwtx-1) family. 13 (Hntx-13) subfamily. Expressed by the venom gland.

The protein resides in the secreted. Its function is as follows. Ion channel inhibitor. This chain is U7-theraphotoxin-Hhn1a 6, found in Cyriopagopus hainanus (Chinese bird spider).